The following is an 85-amino-acid chain: Beta-insect depressant toxin BmKITa (85 aa).

The N-terminal stretch at 1–21 (MKLFLLLLISASMLIDGLVNA) is a signal peptide. Residues 22–82 (DGYIRGSNGC…TWKSESNTCG (61 aa)) form the LCN-type CS-alpha/beta domain. Cystine bridges form between C31/C81, C35/C56, C42/C63, and C46/C65. G82 carries the post-translational modification Glycine amide.

As to expression, expressed by the venom gland.

It localises to the secreted. Depressant insect beta-toxins cause a transient contraction paralysis followed by a slow flaccid paralysis. They bind voltage-independently at site-4 of sodium channels (Nav) and shift the voltage of activation toward more negative potentials thereby affecting sodium channel activation and promoting spontaneous and repetitive firing. This toxin also displays an evident analgesic effect but is devoid of any toxicity on mice. This chain is Beta-insect depressant toxin BmKITa, found in Olivierus martensii (Manchurian scorpion).